The following is a 153-amino-acid chain: Actin-related protein 2/3 complex subunit 5-like protein (153 aa).

S64 is subject to Phosphoserine.

It belongs to the ARPC5 family. In terms of assembly, may be a component of the Arp2/3 complex in which it may replace ARPC5.

Its subcellular location is the cytoplasm. It is found in the cytoskeleton. The protein localises to the cell projection. May function as component of the Arp2/3 complex which is involved in regulation of actin polymerization and together with an activating nucleation-promoting factor (NPF) mediates the formation of branched actin networks. This is Actin-related protein 2/3 complex subunit 5-like protein (ARPC5L) from Bos taurus (Bovine).